The following is a 77-amino-acid chain: U14-theraphotoxin-Cg1a 1 (77 aa).

The first 21 residues, 1 to 21 (MKTSVLLVILGIAAITVQCTA), serve as a signal peptide directing secretion. The propeptide occupies 22 to 49 (SESVEQDSLRTFVDAVLGWNAEMASEAR). Intrachain disulfides connect Cys50/Cys64, Cys57/Cys69, and Cys63/Cys75. Lys77 is subject to Lysine amide.

It belongs to the neurotoxin 10 (Hwtx-1) family. 65 (Jztx-21) subfamily. As to expression, expressed by the venom gland.

Its subcellular location is the secreted. In terms of biological role, probable ion channel inhibitor. The chain is U14-theraphotoxin-Cg1a 1 from Chilobrachys guangxiensis (Chinese earth tiger tarantula).